The chain runs to 481 residues: Guanine nucleotide exchange factor C9orf72 homolog (481 aa).

The 172-residue stretch at 23–194 (SPLLAATFAY…ELLASMRSHS (172 aa)) folds into the uDENN C9ORF72-type domain. The region spanning 200-343 (DIADTVLNDD…SELTAFWRAT (144 aa)) is the cDENN C9ORF72-type domain. Positions 370–464 (VLHRDTLVKA…IKPGLHSFIF (95 aa)) constitute a dDENN C9ORF72-type domain. The segment at 461-481 (SFIFGRPFYTSVQERDVLMTF) is required for the homodimerization of the C9orf72-SMCR8 complex.

As to quaternary structure, component of the C9orf72-SMCR8 complex, at least composed of C9orf72, SMCR8 and WDR41. The complex is formed of two protomers, each individually consisting of one molecule each of C9orf72, SMCR8 and WDR41. The protomers homodimerize via an interaction between C9orf72 (via C-terminus) and SMCR8 (via N-terminus). Within each protomer SMCR8 (via DENN domain) acts as a bridging protein between WDR41 (via C-terminus and N-terminus) and C9orf72 (via C-terminus). The C9orf72-SMCR8 complex associates with the ULK1/ATG1 kinase complex. Interacts with ULK1/ATG1 kinase complex members ULK1, ATG13 and RB1CC1. Interacts with SMCR8; the interaction is direct. Interacts with HNRNPA1, HNRNPA2B1 and UBQLN2. Interacts with small Rab GTPase RAB1A; the interaction mediates recruitment of RAB1A to the ULK1/ATG1 kinase complex. Also interacts with small Rab GTPase RAB7A. Interacts with cofilin. Interacts with GTP-binding proteins ARF1 and ARF6. Interacts with the DLG4/PSD-95. Interacts with CARM1 (via PH domain-like fold). Interacts with RAB39A and RAB39B (in GDP-bound forms); functions as GEF for RAB39A and RAB39B.

Its subcellular location is the nucleus. It is found in the cytoplasm. The protein resides in the P-body. The protein localises to the stress granule. It localises to the endosome. Its subcellular location is the lysosome. It is found in the cytoplasmic vesicle. The protein resides in the autophagosome. The protein localises to the autolysosome. It localises to the secreted. Its subcellular location is the cell projection. It is found in the axon. The protein resides in the growth cone. The protein localises to the perikaryon. Acts as a guanine-nucleotide releasing factor (GEF) for Rab GTPases by promoting the conversion of inactive RAB-GDP to the active form RAB-GTP. Acts as a GEF for RAB39A which enables HOPS-mediated autophagosome-lysosome membrane tethering and fusion in mammalian autophagy. Component of the C9orf72-SMCR8 complex where both subunits display GEF activity and that regulates autophagy. As part of the C9orf72-SMCR8-WDR41 (CSW) complex, functions as GEF for RAB8A and RAB39B, thereby promoting autophagosome maturation. As part of the C9orf72-SMCR8 complex, also functions as GTPase activating protein (GAP) for RAB8A and RAB11A in vitro. The C9orf72-SMCR8 complex also acts as a regulator of autophagy initiation by interacting with the ULK1/ATG1 kinase complex and modulating its protein kinase activity. Promotes initiation of autophagy by regulating the RAB1A-dependent trafficking of the ULK1/ATG1 kinase complex to the phagophore which leads to autophagosome formation. Acts as a regulator of mTORC1 signaling by promoting phosphorylation of mTORC1 substrates. Plays a role in endosomal trafficking. May be involved in regulating the maturation of phagosomes to lysosomes. Promotes the lysosomal localization and lysosome-mediated degradation of CARM1 which leads to inhibition of starvation-induced lipid metabolism. Regulates actin dynamics in motor neurons by inhibiting the GTP-binding activity of ARF6, leading to ARF6 inactivation. This reduces the activity of the LIMK1 and LIMK2 kinases which are responsible for phosphorylation and inactivation of cofilin, leading to CFL1/cofilin activation. Positively regulates axon extension and axon growth cone size in spinal motor neurons. Required for SMCR8 protein expression and localization at pre- and post-synaptic compartments in the forebrain, also regulates protein abundance of RAB3A and GRIA1/GLUR1 in post-synaptic compartments in the forebrain and hippocampus. Plays a role within the hematopoietic system in restricting inflammation and the development of autoimmunity. The chain is Guanine nucleotide exchange factor C9orf72 homolog from Rattus norvegicus (Rat).